Here is a 469-residue protein sequence, read N- to C-terminus: UDP-N-acetylmuramate--L-alanine ligase (469 aa).

ATP is bound at residue 123 to 129 (GSHGKTT).

This sequence belongs to the MurCDEF family.

Its subcellular location is the cytoplasm. The enzyme catalyses UDP-N-acetyl-alpha-D-muramate + L-alanine + ATP = UDP-N-acetyl-alpha-D-muramoyl-L-alanine + ADP + phosphate + H(+). It participates in cell wall biogenesis; peptidoglycan biosynthesis. Its function is as follows. Cell wall formation. The chain is UDP-N-acetylmuramate--L-alanine ligase from Synechococcus sp. (strain CC9605).